Consider the following 100-residue polypeptide: Protein RnfH (100 aa).

The protein belongs to the UPF0125 (RnfH) family.

This is Protein RnfH from Pseudomonas paraeruginosa (strain DSM 24068 / PA7) (Pseudomonas aeruginosa (strain PA7)).